We begin with the raw amino-acid sequence, 218 residues long: Pyridoxine/pyridoxamine 5'-phosphate oxidase (218 aa).

Substrate is bound by residues 14–17 (RREY) and K72. FMN is bound by residues 67–72 (RIVLLK), 82–83 (YT), R88, K89, and Q111. Positions 129, 133, and 137 each coordinate substrate. FMN-binding positions include 146 to 147 (QS) and W191. Substrate is bound at residue 197-199 (RLH). An FMN-binding site is contributed by R201.

The protein belongs to the pyridoxamine 5'-phosphate oxidase family. Homodimer. FMN serves as cofactor.

It catalyses the reaction pyridoxamine 5'-phosphate + O2 + H2O = pyridoxal 5'-phosphate + H2O2 + NH4(+). It carries out the reaction pyridoxine 5'-phosphate + O2 = pyridoxal 5'-phosphate + H2O2. It participates in cofactor metabolism; pyridoxal 5'-phosphate salvage; pyridoxal 5'-phosphate from pyridoxamine 5'-phosphate: step 1/1. Its pathway is cofactor metabolism; pyridoxal 5'-phosphate salvage; pyridoxal 5'-phosphate from pyridoxine 5'-phosphate: step 1/1. Catalyzes the oxidation of either pyridoxine 5'-phosphate (PNP) or pyridoxamine 5'-phosphate (PMP) into pyridoxal 5'-phosphate (PLP). The sequence is that of Pyridoxine/pyridoxamine 5'-phosphate oxidase from Salmonella paratyphi B (strain ATCC BAA-1250 / SPB7).